Consider the following 793-residue polypeptide: Protein smoothened (793 aa).

The first 32 residues, 1 to 32, serve as a signal peptide directing secretion; the sequence is MAAGRPVRGPELAPRRLLQLLLLVLLGGPGRG. The Extracellular segment spans residues 33 to 237; that stretch reads AALSGNVTGP…EAEHQDMHSY (205 aa). Positions 35–61 are disordered; sequence LSGNVTGPGPHSASGSSRRDVPVTSPP. N-linked (GlcNAc...) asparagine glycosylation occurs at Asn38. Intrachain disulfides connect Cys68–Cys182, Cys74–Cys138, Cys82–Cys131, Cys122–Cys158, and Cys151–Cys173. Positions 69–185 constitute an FZ domain; the sequence is GRAAHCEPLR…DHFPEGCPNE (117 aa). Asp99 serves as a coordination point for cholesterol. A glycan (N-linked (GlcNAc...) asparagine) is linked at Asn192. Cystine bridges form between Cys197-Cys217, Cys221-Cys299, and Cys318-Cys394. A helical transmembrane segment spans residues 238-258; it reads IAAFGAVTGLCTLFTLATFVA. Residues 259-265 lie on the Cytoplasmic side of the membrane; sequence DWRNSNR. A helical membrane pass occupies residues 266–286; sequence YPAVILFYVNACFFVGSIGWL. Over 287–318 the chain is Extracellular; the sequence is AQFMDGARREIVCRADGTMRFGEPTSSETLSC. A helical transmembrane segment spans residues 319 to 339; it reads VIIFVIVYYALMAGVVWFVVL. Residues 340–362 are Cytoplasmic-facing; sequence TYAWHTSFKALGTTYQPLSGKTS. The helical transmembrane segment at 363 to 383 threads the bilayer; that stretch reads YFHLLTWSLPFVLTVAILAVA. Over 384–406 the chain is Extracellular; sequence QVDGDSVSGICFVGYKNYRYRAG. A cholesterol-binding site is contributed by Tyr398. The chain crosses the membrane as a helical span at residues 407 to 427; the sequence is FVLAPIGLVLIVGGYFLIRGV. Residues 428 to 455 are Cytoplasmic-facing; that stretch reads MTLFSIKSNHPGLLSEKAASKINETMLR. Residues 456-476 form a helical membrane-spanning segment; the sequence is LGIFGFLAFGFVLITFSCHFY. At 477–528 the chain is on the extracellular side; it reads DFFNQAEWERSFRDYVLCQANVTIGLPTKKPIPDCEIKNRPSLLVEKINLFA. A disulfide bridge connects residues Cys494 and Cys511. N-linked (GlcNAc...) asparagine glycosylation occurs at Asn497. Residues 529–549 traverse the membrane as a helical segment; the sequence is MFGTGIAMSTWVWTKATLLIW. Residues 542–573 form an interaction with BBS5 and BBS7 region; it reads TKATLLIWRRTWCRLTGHSDDEPKRIKKSKMI. The Cytoplasmic segment spans residues 550-793; sequence RRTWCRLTGH…AEILDADSDF (244 aa). Residues Ser560, Ser578, and Ser594 each carry the phosphoserine modification. The segment at 574–657 is required for interaction with PRKACA; that stretch reads AKAFSKRREL…TPVPPEEQAN (84 aa). An interaction with DLG5 region spans residues 585–597; the sequence is QNPGQELSFSMHT. Thr597 is subject to Phosphothreonine. A phosphoserine mark is found at Ser599 and Ser642. Phosphothreonine occurs at positions 644 and 648. Position 666 is a phosphoserine (Ser666). The segment covering 674–684 has biased composition (basic residues); that stretch reads GRKKKRRKRKK. The disordered stretch occupies residues 674–703; it reads GRKKKRRKRKKEVCPLRPAPELHHSAPVPA.

This sequence belongs to the G-protein coupled receptor Fz/Smo family. As to quaternary structure, homodimer. Interacts (via C-terminus) with protein kinase A catalytic subunit PRKACA; interacts with free PRKACA subunits and the interaction leads to sequestration of PRKACA at the membrane, preventing PRKACA-mediated phosphorylation of GLI transcription factors. Interacts with ARRB2. Interacts with BBS5 and BBS7; the interactions are indicative for the association of SMO with the BBsome complex to facilitate ciliary localization of SMO. Interacts with KIF7, DLG5 and SDCBP. Interacts with GAS8/DRC4. Post-translationally, phosphorylation by GRK kinases is required for interaction with protein kinase A catalytic subunit PRKACA. As to expression, during early somite stages of embryonic development, modestly up-regulated in the cells of the node (at protein level).

The protein resides in the cell membrane. The protein localises to the cell projection. It localises to the cilium. In terms of biological role, g protein-coupled receptor which associates with the patched protein (PTCH) to transduce hedgehog protein signaling. Binding of sonic hedgehog (SHH) to its receptor patched prevents inhibition of smoothened (SMO) by patched. When active, SMO binds to and sequesters protein kinase A catalytic subunit PRKACA at the cell membrane, preventing PRKACA-mediated phosphorylation of GLI transcription factors which releases the GLI proteins from PRKACA-mediated inhibition and allows for transcriptional activation of hedgehog pathway target genes. Required for the accumulation of KIF7, GLI2 and GLI3 in the cilia. Interacts with DLG5 at the ciliary base to induce the accumulation of KIF7 and GLI2 at the ciliary tip for GLI2 activation. The polypeptide is Protein smoothened (Smo) (Mus musculus (Mouse)).